The primary structure comprises 259 residues: Type III pantothenate kinase (259 aa).

6–13 contributes to the ATP binding site; it reads DIGNTNVV. Position 107-110 (107-110) interacts with substrate; it reads GADR. Asp109 (proton acceptor) is an active-site residue. Asp129 contacts K(+). Thr132 serves as a coordination point for ATP. Thr184 provides a ligand contact to substrate.

The protein belongs to the type III pantothenate kinase family. Homodimer. Requires NH4(+) as cofactor. The cofactor is K(+).

It localises to the cytoplasm. It catalyses the reaction (R)-pantothenate + ATP = (R)-4'-phosphopantothenate + ADP + H(+). The protein operates within cofactor biosynthesis; coenzyme A biosynthesis; CoA from (R)-pantothenate: step 1/5. Catalyzes the phosphorylation of pantothenate (Pan), the first step in CoA biosynthesis. The sequence is that of Type III pantothenate kinase from Thermomicrobium roseum (strain ATCC 27502 / DSM 5159 / P-2).